The primary structure comprises 559 residues: DNA ligase (559 aa).

An ATP-binding site is contributed by E248. K250 acts as the N6-AMP-lysine intermediate in catalysis. R255, R270, E300, F341, R417, and K423 together coordinate ATP.

It belongs to the ATP-dependent DNA ligase family. Requires Mg(2+) as cofactor.

The enzyme catalyses ATP + (deoxyribonucleotide)n-3'-hydroxyl + 5'-phospho-(deoxyribonucleotide)m = (deoxyribonucleotide)n+m + AMP + diphosphate.. Functionally, DNA ligase that seals nicks in double-stranded DNA during DNA replication, DNA recombination and DNA repair. In Methanopyrus kandleri (strain AV19 / DSM 6324 / JCM 9639 / NBRC 100938), this protein is DNA ligase.